The chain runs to 255 residues: Triosephosphate isomerase (255 aa).

9–11 is a binding site for substrate; it reads NWK. Catalysis depends on H95, which acts as the Electrophile. The Proton acceptor role is filled by E167. Residues G173, S212, and 233–234 contribute to the substrate site; that span reads GG.

Belongs to the triosephosphate isomerase family. In terms of assembly, homodimer.

The protein localises to the cytoplasm. The catalysed reaction is D-glyceraldehyde 3-phosphate = dihydroxyacetone phosphate. It functions in the pathway carbohydrate biosynthesis; gluconeogenesis. It participates in carbohydrate degradation; glycolysis; D-glyceraldehyde 3-phosphate from glycerone phosphate: step 1/1. Functionally, involved in the gluconeogenesis. Catalyzes stereospecifically the conversion of dihydroxyacetone phosphate (DHAP) to D-glyceraldehyde-3-phosphate (G3P). This chain is Triosephosphate isomerase, found in Erwinia tasmaniensis (strain DSM 17950 / CFBP 7177 / CIP 109463 / NCPPB 4357 / Et1/99).